Here is a 170-residue protein sequence, read N- to C-terminus: Large ribosomal subunit protein uL10 (170 aa).

Belongs to the universal ribosomal protein uL10 family. As to quaternary structure, part of the ribosomal stalk of the 50S ribosomal subunit. The N-terminus interacts with L11 and the large rRNA to form the base of the stalk. The C-terminus forms an elongated spine to which L12 dimers bind in a sequential fashion forming a multimeric L10(L12)X complex.

Functionally, forms part of the ribosomal stalk, playing a central role in the interaction of the ribosome with GTP-bound translation factors. This is Large ribosomal subunit protein uL10 from Lactobacillus acidophilus (strain ATCC 700396 / NCK56 / N2 / NCFM).